The chain runs to 450 residues: Sensor histidine kinase EnvZ (450 aa).

At 1–15 (MRRMRFSPRSSFART) the chain is on the cytoplasmic side. Residues 16–35 (LLLIVTLLFVSLVTTYLVVL) traverse the membrane as a helical segment. The Periplasmic segment spans residues 36–158 (NFAILPSLQQ…LTEIHQGDFS (123 aa)). The helical transmembrane segment at 159-179 (PLFRYTLAIMLLAIGGAWLFI) threads the bilayer. An HAMP domain is found at 180 to 232 (RIQNRPLVDLEHAALQVGKGIIPPPLREYGASEVRSVTRAFNHMAAGVKQLAD). The Cytoplasmic portion of the chain corresponds to 180–450 (RIQNRPLVDL…ARVQGTTKEA (271 aa)). The tract at residues 223 to 289 (MAAGVKQLAD…IIEQFIDYLR (67 aa)) is cytoplasmic dimerization domain (CDD), when dimerized forms osmosensitive core. Residues 240–440 (GVSHDLRTPL…SIRAWLPVPV (201 aa)) form the Histidine kinase domain. ATP-binding positions include H243, 347–351 (NAARY), D373, 392–393 (RG), and 402–406 (TGLGL). H243 is subject to Phosphohistidine; by autocatalysis.

Homodimer. Post-translationally, autophosphorylated.

The protein localises to the cell inner membrane. It carries out the reaction ATP + protein L-histidine = ADP + protein N-phospho-L-histidine.. In terms of biological role, member of the two-component regulatory system EnvZ/OmpR involved in regulating expression of the outer membrane porins OmpC and OmpF as well as other genes. Unlike E.coli or S.typhimurium both porins are expressed constitutively. Involved in regulation of the biosynthesis of Vi polysaccharide, a capsular antigen thought to be involved in the virulence of S.typhi. Vi antigen is synthesized at low NaCl concentrations (under 0.4 M). EnvZ functions as a membrane-associated protein kinase that phosphorylates OmpR in response to environmental signals. This is Sensor histidine kinase EnvZ (envZ) from Salmonella typhi.